The sequence spans 294 residues: uncharacterized protein (294 aa).

Residues 1 to 32 (MSHLKDPTTQYYTGEYPKQKQPTPGIQAKMTP) form a disordered region. Lys39 is modified (N6-acetyllysine). Residue 53-77 (LVTGGDSGIGRAAAIAYAREGADVA) coordinates NADP(+). Residue Ser186 participates in substrate binding. Tyr199 serves as the catalytic Proton acceptor.

It belongs to the short-chain dehydrogenases/reductases (SDR) family.

This is an uncharacterized protein from Escherichia coli (strain K12).